We begin with the raw amino-acid sequence, 426 residues long: AP-1 complex subunit mu-1 (426 aa).

Residues Lys167–Arg425 enclose the MHD domain.

Belongs to the adaptor complexes medium subunit family. Adaptor protein complex 1 (AP-1) is a heterotetramer composed of two large adaptins (gamma-type subunit apl4 and beta-type subunit apl2), a medium adaptin (mu-type subunit apm1) and a small adaptin (sigma-type subunit aps1). AP-1 interacts with clathrin. Interacts with sad1.

It localises to the cytoplasmic vesicle. Its subcellular location is the clathrin-coated vesicle membrane. The protein resides in the membrane. It is found in the clathrin-coated pit. Its function is as follows. Component of the adaptor complexes which link clathrin to receptors in coated vesicles. Clathrin-associated protein complexes are believed to interact with the cytoplasmic tails of membrane proteins, leading to their selection and concentration. This Schizosaccharomyces pombe (strain 972 / ATCC 24843) (Fission yeast) protein is AP-1 complex subunit mu-1 (apm1).